We begin with the raw amino-acid sequence, 190 residues long: Peptide methionine sulfoxide reductase A2-2 (190 aa).

Residues 1–20 are disordered; the sequence is MSNDTGADGGAANPDLGPDA. Over residues 10-20 the composition is skewed to low complexity; it reads GAANPDLGPDA.

It belongs to the MsrA Met sulfoxide reductase family.

It is found in the cytoplasm. It localises to the cytosol. It catalyses the reaction L-methionyl-[protein] + [thioredoxin]-disulfide + H2O = L-methionyl-(S)-S-oxide-[protein] + [thioredoxin]-dithiol. The enzyme catalyses [thioredoxin]-disulfide + L-methionine + H2O = L-methionine (S)-S-oxide + [thioredoxin]-dithiol. Its function is as follows. Catalyzes the reduction of methionine sulfoxide (MetSO) to methionine in proteins. Plays a protective role against oxidative stress by restoring activity to proteins that have been inactivated by methionine oxidation. MSRA family specifically reduces the MetSO S-enantiomer. The protein is Peptide methionine sulfoxide reductase A2-2 (MSRA2-2) of Oryza sativa subsp. japonica (Rice).